The sequence spans 570 residues: Dihydroxy-acid dehydratase (570 aa).

Cysteine 61 lines the [2Fe-2S] cluster pocket. A Mg(2+)-binding site is contributed by aspartate 94. Cysteine 135 lines the [2Fe-2S] cluster pocket. Mg(2+) contacts are provided by aspartate 136 and lysine 137. At lysine 137 the chain carries N6-carboxylysine. Residue cysteine 207 coordinates [2Fe-2S] cluster. Glutamate 459 is a Mg(2+) binding site. The Proton acceptor role is filled by serine 485.

It belongs to the IlvD/Edd family. Homodimer. Requires [2Fe-2S] cluster as cofactor. The cofactor is Mg(2+).

It catalyses the reaction (2R)-2,3-dihydroxy-3-methylbutanoate = 3-methyl-2-oxobutanoate + H2O. It carries out the reaction (2R,3R)-2,3-dihydroxy-3-methylpentanoate = (S)-3-methyl-2-oxopentanoate + H2O. It functions in the pathway amino-acid biosynthesis; L-isoleucine biosynthesis; L-isoleucine from 2-oxobutanoate: step 3/4. Its pathway is amino-acid biosynthesis; L-valine biosynthesis; L-valine from pyruvate: step 3/4. Functionally, functions in the biosynthesis of branched-chain amino acids. Catalyzes the dehydration of (2R,3R)-2,3-dihydroxy-3-methylpentanoate (2,3-dihydroxy-3-methylvalerate) into 2-oxo-3-methylpentanoate (2-oxo-3-methylvalerate) and of (2R)-2,3-dihydroxy-3-methylbutanoate (2,3-dihydroxyisovalerate) into 2-oxo-3-methylbutanoate (2-oxoisovalerate), the penultimate precursor to L-isoleucine and L-valine, respectively. The sequence is that of Dihydroxy-acid dehydratase from Lactococcus lactis subsp. lactis (strain IL1403) (Streptococcus lactis).